Reading from the N-terminus, the 156-residue chain is Class I hydrophobin B (156 aa).

The N-terminal stretch at 1–18 is a signal peptide; that stretch reads MQFTLSAVVLALAGFSAA. 4 cysteine pairs are disulfide-bonded: cysteine 52–cysteine 130, cysteine 60–cysteine 124, cysteine 61–cysteine 101, and cysteine 131–cysteine 149.

This sequence belongs to the fungal hydrophobin family.

It is found in the secreted. The protein localises to the cell wall. Functionally, aerial growth, conidiation, and dispersal of filamentous fungi in the environment rely upon a capability of their secreting small amphipathic proteins called hydrophobins (HPBs) with low sequence identity. Class I can self-assemble into an outermost layer of rodlet bundles on aerial cell surfaces, conferring cellular hydrophobicity that supports fungal growth, development and dispersal; whereas Class II form highly ordered films at water-air interfaces through intermolecular interactions but contribute nothing to the rodlet structure. In P.expansum, hydrophobins contribute to germination, tolerance to cold stress and mycotoxins patulin and citrinin production. HfbA and HfbB are essential for fungal surface hydrophobicity. This is Class I hydrophobin B from Penicillium expansum (Blue mold rot fungus).